We begin with the raw amino-acid sequence, 488 residues long: MSSAAMDTKHFLPLGGRTCADTLRCTTSWTAGYDFSSQVNSSSLSSSGLRGSMTAPLLHPSLGNSGLNNSLGSPTQLPSPLSSPINGMGPPFSVISPPLGPSMAIPSTPGLGYGTGSPQIHSPMNSVSSTEDIKPPPGINGILKVPMHPSGAMASFTKHICAICGDRSSGKHYGVYSCEGCKGFFKRTVRKDLTYTCRDSKDCMIDKRQRNRCQYCRYQKCLAMGMKREAVQEERQRGKERNENEVESSNSANEDMPVEKILEAEHAVEPKTETYTEANMGLAPNSPSDPVTNICQAADKQLFTLVEWAKRIPHFSELPLDDQVILLRAGWNELLIASFSHRSIAVKDGILLATGLHVHRNSAHSAGVGAIFDRVLTELVSKMRDMQMDKTELGCLRAIVLFNPDSKGLSNPLEVEALREKVYASLEAYCKQKYPEQPGRFAKLLLRLPALRSIGLKCLEHLFFFKLIGDTPIDTFLMEMLEAPHQMT.

Residues 1-160 form a modulating region; that stretch reads MSSAAMDTKH…GAMASFTKHI (160 aa). Lysine 134 is covalently cross-linked (Glycyl lysine isopeptide (Lys-Gly) (interchain with G-Cter in SUMO)). Positions 158 to 233 form a DNA-binding region, nuclear receptor; the sequence is KHICAICGDR…MGMKREAVQE (76 aa). Zn(2+)-binding residues include cysteine 161, cysteine 164, cysteine 178, and cysteine 181. Residues 161–181 form an NR C4-type zinc finger; that stretch reads CAICGDRSSGKHYGVYSCEGC. Positions 186–191 are nuclear localization signal; the sequence is KRTVRK. Zn(2+) contacts are provided by cysteine 197, cysteine 203, cysteine 213, and cysteine 216. The segment at 197–216 adopts an NR C4-type zinc-finger fold; that stretch reads CRDSKDCMIDKRQRNRCQYC. A hinge region spans residues 227–250; it reads KREAVQEERQRGKERNENEVESSN. The span at 232–244 shows a compositional bias: basic and acidic residues; that stretch reads QEERQRGKERNEN. The disordered stretch occupies residues 232–256; the sequence is QEERQRGKERNENEVESSNSANEDM. Residues 253 to 484 form the NR LBD domain; it reads NEDMPVEKIL…TFLMEMLEAP (232 aa). 9-cis-retinoate contacts are provided by arginine 342 and alanine 353. The all-trans-retinoate site is built by arginine 342 and alanine 353. Positions 374–394 are required for nuclear export; the sequence is RVLTELVSKMRDMQMDKTELG. The AF-2 stretch occupies residues 473–484; it reads IDTFLMEMLEAP.

Belongs to the nuclear hormone receptor family. NR2 subfamily. As to quaternary structure, homodimer. Heterodimer; with a rar molecule. Binds DNA preferentially as a rar/rxr heterodimer. Interacts with coactivator ncoa3 and with senp6. Sumoylated on Lys-134; which negatively regulates transcriptional activity. Desumoylated specifically by SENP6.

It localises to the nucleus. Its function is as follows. Receptor for retinoic acid that acts as a transcription factor. Forms homo- or heterodimers with retinoic acid receptors (rars) and binds to target response elements in response to their ligands, all-trans or 9-cis retinoic acid, to regulate gene expression in various biological processes. The rar/rxr heterodimers bind to the retinoic acid response elements (RARE) composed of tandem 5'-AGGTCA-3' sites known as DR1-DR5 to regulate transcription. The high affinity ligand for rxrs is 9-cis retinoic acid. In the absence of ligand, the rar/rxr heterodimers associate with a multiprotein complex containing transcription corepressors that induce histone deacetylation, chromatin condensation and transcriptional suppression. On ligand binding, the corepressors dissociate from the receptors and coactivators are recruited leading to transcriptional activation. The protein is Retinoic acid receptor RXR-alpha (rxra) of Xenopus laevis (African clawed frog).